Consider the following 95-residue polypeptide: Acylphosphatase (95 aa).

The region spanning R8–R95 is the Acylphosphatase-like domain. Active-site residues include R23 and N41.

This sequence belongs to the acylphosphatase family.

The catalysed reaction is an acyl phosphate + H2O = a carboxylate + phosphate + H(+). The protein is Acylphosphatase (acyP) of Salinibacter ruber (strain DSM 13855 / M31).